A 414-amino-acid polypeptide reads, in one-letter code: TAR DNA-binding protein 43 (414 aa).

Glycyl lysine isopeptide (Lys-Gly) (interchain with G-Cter in SUMO2) cross-links involve residues Lys79, Lys84, Lys95, Lys102, and Lys181. 2 RRM domains span residues 104-200 (SDLI…RCTE) and 191-262 (RKVF…NAEP). Ser183 is modified (phosphoserine). Positions 216–414 (DVMDVFIPKP…MDSKSSGWGM (199 aa)) are interaction with UBQLN2. The span at 261–274 (EPKHNSNRQLERSG) shows a compositional bias: basic and acidic residues. Disordered stretches follow at residues 261-303 (EPKH…GNNQ) and 341-373 (ASQQ…GNNS). Residue Lys263 forms a Glycyl lysine isopeptide (Lys-Gly) (interchain with G-Cter in SUMO2) linkage. Positions 275-303 (RFGGNPGGFGNQGGFGNSRGGGAGLGNNQ) are enriched in gly residues. Ser292 is modified (phosphoserine). Arg293 carries the omega-N-methylarginine modification. A compositionally biased stretch (low complexity) spans 342 to 358 (SQQNQSGPSGNNQNQGN).

As to quaternary structure, monomer and component of the SFPQ-NONO complex, which is probably a heterotetramer of two 52 kDa (NONO) and two 100 kDa (SFPQ) subunits. NONO is a component of spliceosome and U5.4/6 snRNP complexes. Interacts with CPNE4 (via VWFA domain). Forms heterodimers with PSPC1; this involves formation of a coiled coil domain by helices from both proteins. Part of complex consisting of SFPQ, NONO and MATR3. Part of a complex consisting of SFPQ, NONO and NR5A1. Part of a complex consisting of SFPQ, NONO and TOP1. Interacts with SPI1. Interacts with RNF43. Interacts with PER1 and PER2. Part of the HDP-RNP complex composed of at least HEXIM1, PRKDC, XRCC5, XRCC6, paraspeckle proteins (SFPQ, NONO, PSPC1, RBM14, and MATR3) and NEAT1 RNA. Interacts (via second RRM domain) with WASL; the interaction is direct. Component of a multiprotein complex with WASL and SFPQ. Interacts with ERCC6. Interacts (via DNA-binding domain) with TET1. Hyperphosphorylated. In terms of processing, ubiquitinated.

It localises to the nucleus. It is found in the nucleolus. The protein resides in the nucleus speckle. The protein localises to the chromosome. Its subcellular location is the mitochondrion. In terms of biological role, DNA- and RNA binding protein, involved in several nuclear processes. Binds the conventional octamer sequence in double-stranded DNA. Also binds single-stranded DNA and RNA at a site independent of the duplex site. Involved in pre-mRNA splicing, probably as a heterodimer with SFPQ. Interacts with U5 snRNA, probably by binding to a purine-rich sequence located on the 3' side of U5 snRNA stem 1b. Together with PSPC1, required for the formation of nuclear paraspeckles. The SFPQ-NONO heteromer associated with MATR3 may play a role in nuclear retention of defective RNAs. The SFPQ-NONO heteromer may be involved in DNA unwinding by modulating the function of topoisomerase I/TOP1. The SFPQ-NONO heteromer may be involved in DNA non-homologous end joining (NHEJ) required for double-strand break repair and V(D)J recombination and may stabilize paired DNA ends. In vitro, the complex strongly stimulates DNA end joining, binds directly to the DNA substrates and cooperates with the Ku70/G22P1-Ku80/XRCC5 (Ku) dimer to establish a functional preligation complex. NONO is involved in transcriptional regulation. The SFPQ-NONO-NR5A1 complex binds to the CYP17 promoter and regulates basal and cAMP-dependent transcriptional activity. NONO binds to an enhancer element in long terminal repeats of endogenous intracisternal A particles (IAPs) and activates transcription. Regulates the circadian clock by repressing the transcriptional activator activity of the CLOCK-BMAL1 heterodimer. Important for the functional organization of GABAergic synapses. Plays a specific and important role in the regulation of synaptic RNAs and GPHN/gephyrin scaffold structure, through the regulation of GABRA2 transcript. Plays a key role during neuronal differentiation by recruiting TET1 to genomic loci and thereby regulating 5-hydroxymethylcytosine levels. Plays a role in the regulation of DNA virus-mediated innate immune response by assembling into the HDP-RNP complex, a complex that serves as a platform for IRF3 phosphorylation and subsequent innate immune response activation through the cGAS-STING pathway. In Pongo abelii (Sumatran orangutan), this protein is TAR DNA-binding protein 43 (TARDBP).